We begin with the raw amino-acid sequence, 125 residues long: Large ribosomal subunit protein uL22 (125 aa).

The protein belongs to the universal ribosomal protein uL22 family. Part of the 50S ribosomal subunit.

Its function is as follows. This protein binds specifically to 23S rRNA; its binding is stimulated by other ribosomal proteins, e.g. L4, L17, and L20. It is important during the early stages of 50S assembly. It makes multiple contacts with different domains of the 23S rRNA in the assembled 50S subunit and ribosome. In terms of biological role, the globular domain of the protein is located near the polypeptide exit tunnel on the outside of the subunit, while an extended beta-hairpin is found that lines the wall of the exit tunnel in the center of the 70S ribosome. This Erythrobacter litoralis (strain HTCC2594) protein is Large ribosomal subunit protein uL22.